The primary structure comprises 253 residues: MDRPGETTHFGFRDVPLGDKQTLVNDVFHSVASRYDLMNDLMSGGLHRVWKDIMINALDPPRGDRPFALLDVAGGTGDISFRAAKAAGPGFHATVCDINSDMLAVGRERAAKRHLETQVDFVEGNAEALAFADRSFDAYTIAFGIRNVPQIDLALREAYRVLRPGSRFLCLEFSTVEMPGLDKLYDLFSFKVIPPLGRMITGDAESYQYLVESIRKFPKPNAFADMIRDAGFARVNWQTLSGGIVALHSGWRL.

S-adenosyl-L-methionine-binding positions include threonine 76, aspartate 97, and 125–126; that span reads NA.

The protein belongs to the class I-like SAM-binding methyltransferase superfamily. MenG/UbiE family.

The catalysed reaction is a 2-demethylmenaquinol + S-adenosyl-L-methionine = a menaquinol + S-adenosyl-L-homocysteine + H(+). It carries out the reaction a 2-methoxy-6-(all-trans-polyprenyl)benzene-1,4-diol + S-adenosyl-L-methionine = a 5-methoxy-2-methyl-3-(all-trans-polyprenyl)benzene-1,4-diol + S-adenosyl-L-homocysteine + H(+). It participates in quinol/quinone metabolism; menaquinone biosynthesis; menaquinol from 1,4-dihydroxy-2-naphthoate: step 2/2. The protein operates within cofactor biosynthesis; ubiquinone biosynthesis. Methyltransferase required for the conversion of demethylmenaquinol (DMKH2) to menaquinol (MKH2) and the conversion of 2-polyprenyl-6-methoxy-1,4-benzoquinol (DDMQH2) to 2-polyprenyl-3-methyl-6-methoxy-1,4-benzoquinol (DMQH2). The protein is Ubiquinone/menaquinone biosynthesis C-methyltransferase UbiE of Bradyrhizobium diazoefficiens (strain JCM 10833 / BCRC 13528 / IAM 13628 / NBRC 14792 / USDA 110).